A 633-amino-acid polypeptide reads, in one-letter code: MAAQPVSRVVRRVLRAGVRSCSSGAPVTQPCPGEPVVEVLSRPRPFLGEHAAPFSAFLTDSFGRHHSYLRISLTERCNLRCQYCMPEEGVPLTPKADLLTTEEILTLARLFVKEGVDKIRLTGGEPLIRPDVVDIVAQLRQLEGLRTIGITTNGINLARLLPQLQKAGLSAINISLDTLVPAKFEFIVRRKGFHKVMEGIHKAIELGYSPVKVNCVVMRGLNEDELLDFVALTEGLPLDVRFIEYMPFDGNKWNFKKMVSYKEMLDTLRQQWPELEKLPEEESSTAKAFKIPGFRGQVSFITSMSEHFCGTCNRLRITADGNLKVCLFGNSEVSLRDHLRAGASEEELLRVIGAAVGRKKRQHAGMFNISQMKNRPMILIELFLMRQDSPPALPSTFRNSLRVQVLRHRVSFSSQMVTLWKGGGVPQAPLVAQRWLGSSLPQRHFSSHLDSDANPKCLSPTEPQAPAASSGPLPDSDQLTHVDTEGRMAMVDVGRKPDTERVAVASAVVLLGPVAFKLIQENQLKKGDALAVAQLAGIQAAKLTSQLIPLCHHVALSHVQVQLELDRTRHAAVIQASCRARGPTGVEMEALTSAAVAALALYDMCKAVSRDIVLAEIKLVSKTGGQRGDFHRT.

Residues 1–380 (MAAQPVSRVV…QMKNRPMILI (380 aa)) are molybdenum cofactor biosynthesis protein A. S61 is subject to Phosphoserine. Positions 61–295 (SFGRHHSYLR…AKAFKIPGFR (235 aa)) constitute a Radical SAM core domain. Residue R70 participates in GTP binding. Residues C77 and C81 each contribute to the [4Fe-4S] cluster site. Y83 is an S-adenosyl-L-methionine binding site. C84 provides a ligand contact to [4Fe-4S] cluster. R120 serves as a coordination point for GTP. Residue G124 coordinates S-adenosyl-L-methionine. T151 contacts GTP. S175 lines the S-adenosyl-L-methionine pocket. N6-acetyllysine is present on K195. A GTP-binding site is contributed by K212. Position 246 (M246) interacts with S-adenosyl-L-methionine. Residues C309 and C312 each coordinate [4Fe-4S] cluster. A GTP-binding site is contributed by 314 to 316 (RLR). C326 serves as a coordination point for [4Fe-4S] cluster. The interval 410–633 (VSFSSQMVTL…GGQRGDFHRT (224 aa)) is molybdenum cofactor biosynthesis protein C. Residues 446-480 (SSHLDSDANPKCLSPTEPQAPAASSGPLPDSDQLT) form a disordered region. Position 525 is an N6-acetyllysine (K525). The active-site For molybdenum cofactor biosynthesis protein C activity is D603.

This sequence in the C-terminal section; belongs to the MoaC family. It in the N-terminal section; belongs to the radical SAM superfamily. MoaA family. As to quaternary structure, isoform MOCS1A and isoform MOCS1B probably form a heterooligomer. It depends on [4Fe-4S] cluster as a cofactor.

It catalyses the reaction GTP + AH2 + S-adenosyl-L-methionine = (8S)-3',8-cyclo-7,8-dihydroguanosine 5'-triphosphate + 5'-deoxyadenosine + L-methionine + A + H(+). The catalysed reaction is (8S)-3',8-cyclo-7,8-dihydroguanosine 5'-triphosphate = cyclic pyranopterin phosphate + diphosphate. It functions in the pathway cofactor biosynthesis; molybdopterin biosynthesis. Its function is as follows. Isoform MOCS1A and isoform MOCS1B probably form a complex that catalyzes the conversion of 5'-GTP to cyclic pyranopterin monophosphate (cPMP). MOCS1A catalyzes the cyclization of GTP to (8S)-3',8-cyclo-7,8-dihydroguanosine 5'-triphosphate and MOCS1B catalyzes the subsequent conversion of (8S)-3',8-cyclo-7,8-dihydroguanosine 5'-triphosphate to cPMP. This chain is Molybdenum cofactor biosynthesis protein 1 (MOCS1), found in Bos taurus (Bovine).